The primary structure comprises 162 residues: Inorganic pyrophosphatase (162 aa).

Glu8 contributes to the Mg(2+) binding site. Positions 16, 30, and 42 each coordinate substrate. Mg(2+)-binding residues include Asp52, Asp57, Asp84, and Asp89. Catalysis depends on Asp89, which acts as the Proton acceptor. Tyr126 serves as a coordination point for substrate.

The protein belongs to the PPase family. In terms of assembly, homohexamer. It depends on Mg(2+) as a cofactor.

It is found in the cytoplasm. It carries out the reaction diphosphate + H2O = 2 phosphate + H(+). Catalyzes the hydrolysis of inorganic pyrophosphate (PPi) forming two phosphate ions. In Mycobacterium bovis (strain ATCC BAA-935 / AF2122/97), this protein is Inorganic pyrophosphatase.